Consider the following 600-residue polypeptide: Elongation factor 4 (600 aa).

One can recognise a tr-type G domain in the interval 5-187 (KYIRNFSIIA…AIINKLPSPK (183 aa)). GTP is bound by residues 17–22 (DHGKST) and 134–137 (NKID).

It belongs to the TRAFAC class translation factor GTPase superfamily. Classic translation factor GTPase family. LepA subfamily.

The protein localises to the cell inner membrane. The catalysed reaction is GTP + H2O = GDP + phosphate + H(+). In terms of biological role, required for accurate and efficient protein synthesis under certain stress conditions. May act as a fidelity factor of the translation reaction, by catalyzing a one-codon backward translocation of tRNAs on improperly translocated ribosomes. Back-translocation proceeds from a post-translocation (POST) complex to a pre-translocation (PRE) complex, thus giving elongation factor G a second chance to translocate the tRNAs correctly. Binds to ribosomes in a GTP-dependent manner. The polypeptide is Elongation factor 4 (Rickettsia typhi (strain ATCC VR-144 / Wilmington)).